The sequence spans 412 residues: Phosphoglycerate kinase (412 aa).

Substrate is bound by residues 24-26, Arg-47, 70-73, Arg-130, and Arg-167; these read DLN and HLGR. Residues Lys-217, Gly-312, Glu-343, and 369 to 372 contribute to the ATP site; that span reads GGDS.

It belongs to the phosphoglycerate kinase family. As to quaternary structure, monomer.

It localises to the cytoplasm. It catalyses the reaction (2R)-3-phosphoglycerate + ATP = (2R)-3-phospho-glyceroyl phosphate + ADP. It functions in the pathway carbohydrate degradation; glycolysis; pyruvate from D-glyceraldehyde 3-phosphate: step 2/5. The chain is Phosphoglycerate kinase from Kineococcus radiotolerans (strain ATCC BAA-149 / DSM 14245 / SRS30216).